The primary structure comprises 54 residues: Ribulose bisphosphate carboxylase large chain (54 aa).

Residues 1-2 (MS) constitute a propeptide that is removed on maturation. Position 3 is an N-acetylproline (proline 3). Lysine 14 carries the post-translational modification N6,N6,N6-trimethyllysine.

This sequence belongs to the RuBisCO large chain family. Type I subfamily. In terms of assembly, heterohexadecamer of 8 large chains and 8 small chains.

Its subcellular location is the plastid. It is found in the chloroplast. The enzyme catalyses 2 (2R)-3-phosphoglycerate + 2 H(+) = D-ribulose 1,5-bisphosphate + CO2 + H2O. It carries out the reaction D-ribulose 1,5-bisphosphate + O2 = 2-phosphoglycolate + (2R)-3-phosphoglycerate + 2 H(+). Functionally, ruBisCO catalyzes two reactions: the carboxylation of D-ribulose 1,5-bisphosphate, the primary event in carbon dioxide fixation, as well as the oxidative fragmentation of the pentose substrate in the photorespiration process. Both reactions occur simultaneously and in competition at the same active site. In Magnolia liliiflora (Mulan magnolia), this protein is Ribulose bisphosphate carboxylase large chain (rbcL).